Consider the following 126-residue polypeptide: UPF0102 protein Cphamn1_0017 (126 aa).

It belongs to the UPF0102 family.

This is UPF0102 protein Cphamn1_0017 from Chlorobium phaeobacteroides (strain BS1).